A 927-amino-acid chain; its full sequence is DNA mismatch repair protein MutS (927 aa).

Residues 44–80 (DESLKRPRNRHKPTSVPSIPLDSESQEQLETADNDND) are disordered. Acidic residues predominate over residues 67 to 79 (ESQEQLETADNDN). 725–732 (GPNASGKS) serves as a coordination point for ATP.

The protein belongs to the DNA mismatch repair MutS family.

Functionally, this protein is involved in the repair of mismatches in DNA. It is possible that it carries out the mismatch recognition step. This protein has a weak ATPase activity. This is DNA mismatch repair protein MutS from Prochlorococcus marinus (strain MIT 9303).